We begin with the raw amino-acid sequence, 500 residues long: NAD(P)H-quinone oxidoreductase chain 4, chloroplastic (500 aa).

Helical transmembrane passes span 4-24 (FPWL…IFFL), 35-55 (YTIC…CYHF), 87-107 (IGPI…AWPV), 134-154 (LLLF…LLAM), 167-187 (FILY…GVAL), 208-228 (VLEI…SPII), 242-262 (HYST…YGLI), 272-292 (AHSI…IYAA), 305-325 (IAYP…SLTD), 330-350 (GALL…FLAG), 386-406 (LALP…GIIT), 411-431 (LLIP…LTPI), and 462-482 (LFLS…PDFV).

It belongs to the complex I subunit 4 family.

The protein resides in the plastid. It is found in the chloroplast thylakoid membrane. The enzyme catalyses a plastoquinone + NADH + (n+1) H(+)(in) = a plastoquinol + NAD(+) + n H(+)(out). It catalyses the reaction a plastoquinone + NADPH + (n+1) H(+)(in) = a plastoquinol + NADP(+) + n H(+)(out). This is NAD(P)H-quinone oxidoreductase chain 4, chloroplastic from Solanum tuberosum (Potato).